The sequence spans 575 residues: Serine/threonine-protein kinase Pink1, mitochondrial (575 aa).

Residues M1 to F51 constitute a mitochondrion transit peptide. At L52–R94 the chain is on the mitochondrial intermembrane side. A helical transmembrane segment spans residues L95–L118. Over T119–N575 the chain is Cytoplasmic. K193 lines the ATP pocket. Phosphoserine; by autocatalysis occurs at positions 202 and 204. A Mg(2+)-binding site is contributed by E214. T305 carries the phosphothreonine; by autocatalysis modification. The active-site Proton acceptor is the D334. Positions 339 and 357 each coordinate Mg(2+).

Belongs to the protein kinase superfamily. Ser/Thr protein kinase family. Mg(2+) serves as cofactor. Proteolytically cleaved. In healthy cells, the precursor is continuously imported into mitochondria where it is proteolytically cleaved into its short form by the mitochondrial rhomboid protease rho-7 (8231301). The short form is then released into the cytosol where it rapidly undergoes proteasome-dependent degradation. In unhealthy cells, when cellular stress conditions lead to the loss of mitochondrial membrane potential, mitochondrial import is impaired leading to the precursor accumulating on the outer mitochondrial membrane (OMM). Post-translationally, autophosphorylated. Autophosphorylated on Ser-202, which activates kinase activity. Loss of mitochondrial membrane potential results in the precursor accumulating on the outer mitochondrial membrane (OMM) where it is activated by autophosphorylation at Ser-202. Autophosphorylation is sufficient and essential for selective recruitment of park to depolarized mitochondria, likely via Pink1-dependent phosphorylation of polyubiquitin chains. Also autophosphorylated at Ser-204 and Thr-305.

The protein resides in the mitochondrion outer membrane. It localises to the mitochondrion inner membrane. It is found in the cytoplasm. Its subcellular location is the cytosol. It catalyses the reaction L-seryl-[protein] + ATP = O-phospho-L-seryl-[protein] + ADP + H(+). The catalysed reaction is L-threonyl-[protein] + ATP = O-phospho-L-threonyl-[protein] + ADP + H(+). Functionally, acts as a serine/threonine-protein kinase. Exhibits a substrate preference for proline at position P+1 and a general preference at several residues for basic residues such as arginine. Also exhibits moderate preferences for a phosphotyrosine at position P-3 and a tryptophan at P-5. Critical to mitochondrial homeostasis it mediates several pathways that maintain mitochondrial health and function Protects against mitochondrial dysfunction during cellular stress by phosphorylating mitochondrial proteins such as park and likely Drp1, to coordinate mitochondrial quality control mechanisms that remove and replace dysfunctional mitochondrial components. Depending on the severity of mitochondrial damage and/or dysfunction, activity ranges from preventing apoptosis and stimulating mitochondrial biogenesis to regulating mitochondrial dynamics and eliminating severely damaged mitochondria via mitophagy. Appears to be particularly important in maintaining the physiology and function of cells with high energy demands that are undergoing stress or altered metabolic environment, including spermatids, muscle cells and neurons such as the dopaminergic (DA) neurons. Mediates the translocation and activation of park at the outer membrane (OMM) of dysfunctional/depolarized mitochondria. At the OMM of damaged mitochondria, phosphorylates pre-existing polyubiquitin chains, the Pink1-phosphorylated polyubiquitin then recruits park from the cytosol to the OMM where park is fully activated by phosphorylation at 'Ser-94' by Pink1. When cellular stress results in irreversible mitochondrial damage, functions with park to promote the clearance of dysfunctional and/or depolarized mitochondria by selective autophagy (mitophagy). The Pink1-park pathway also promotes fission and/or inhibits fusion of damaged mitochondria, by phosphorylating and thus promoting the park-dependent degradation of proteins involved in mitochondrial fusion/fission such as Marf, Opa1 and fzo. This prevents the refusion of unhealthy mitochondria with the mitochondrial network or initiates mitochondrial fragmentation facilitating their later engulfment by autophagosomes. Also likely to promote mitochondrial fission independently of park and Atg7-mediated mitophagy, via the phosphorylation and activation of Drp1. Regulates motility of damaged mitochondria by phosphorylating Miro which likely promotes its park-dependent degradation by the proteasome; in motor neurons, this inhibits mitochondrial intracellular anterograde transport along the axons which probably increases the chance of the mitochondria being eliminated in the soma. The Pink1-park pathway is also involved in mitochondrial regeneration processes such as promoting mitochondrial biogenesis, activating localized mitochondrial repair, promoting selective turnover of mitochondrial proteins and initiating the mitochondrial import of endogenous proteins. Involved in mitochondrial biogenesis by promoting the park-dependent ubiquitination of transcriptional repressor Paris which leads to its subsequent proteasomal degradation and allows activation of the transcription factor srl. Functions with park to promote localized mitochondrial repair by activating the translation of specific nuclear-encoded mitochondrial RNAs (nc-mtRNAs) on the mitochondrial surface, including several key electron transport chain component nc-mtRNAs. During oogenesis, phosphorylates and inactivates larp on the membrane of defective mitochondria, thus impairing local translation and mtDNA replication and consequently, reducing transmission of deleterious mtDNA mutations to the mature oocyte. Phosphorylates the mitochondrial acyl-CoA dehydrogenase Mcad, and appears to be important for maintaining fatty acid and amino acid metabolism via a mechanism that is independent of it's role in maintaining production of ATP. The polypeptide is Serine/threonine-protein kinase Pink1, mitochondrial (Pediculus humanus subsp. corporis (Body louse)).